Reading from the N-terminus, the 639-residue chain is Elongation factor 4 (639 aa).

The region spanning 39 to 220 (AQIRNFCIIA…EVVRLVPPPT (182 aa)) is the tr-type G domain. GTP is bound by residues 51-56 (DHGKST) and 167-170 (NKID).

It belongs to the TRAFAC class translation factor GTPase superfamily. Classic translation factor GTPase family. LepA subfamily.

It is found in the cell membrane. The catalysed reaction is GTP + H2O = GDP + phosphate + H(+). Required for accurate and efficient protein synthesis under certain stress conditions. May act as a fidelity factor of the translation reaction, by catalyzing a one-codon backward translocation of tRNAs on improperly translocated ribosomes. Back-translocation proceeds from a post-translocation (POST) complex to a pre-translocation (PRE) complex, thus giving elongation factor G a second chance to translocate the tRNAs correctly. Binds to ribosomes in a GTP-dependent manner. The sequence is that of Elongation factor 4 from Mycobacterium sp. (strain JLS).